A 353-amino-acid chain; its full sequence is Serine proteinase inhibitor 1 (353 aa).

This sequence belongs to the serpin family. Poxviruses subfamily.

The protein localises to the host cytoplasm. Plays a role in mediating viral host range. May act to inhibit a caspase independent form of apoptosis to allow efficient virus replication in infected cells. The protein is Serine proteinase inhibitor 1 (OPG208) of Vaccinia virus (strain Copenhagen) (VACV).